We begin with the raw amino-acid sequence, 133 residues long: Small ribosomal subunit protein uS8 (133 aa).

Belongs to the universal ribosomal protein uS8 family. As to quaternary structure, part of the 30S ribosomal subunit. Contacts proteins S5 and S12.

Its function is as follows. One of the primary rRNA binding proteins, it binds directly to 16S rRNA central domain where it helps coordinate assembly of the platform of the 30S subunit. This chain is Small ribosomal subunit protein uS8, found in Nostoc punctiforme (strain ATCC 29133 / PCC 73102).